Here is a 629-residue protein sequence, read N- to C-terminus: tRNA uridine 5-carboxymethylaminomethyl modification enzyme MnmG (629 aa).

Residues 13–18 (GGGHAG), Val125, and Ser180 contribute to the FAD site. 273 to 287 (GPRYCPSIEDKVMRF) lines the NAD(+) pocket. Gln370 provides a ligand contact to FAD.

Belongs to the MnmG family. In terms of assembly, homodimer. Heterotetramer of two MnmE and two MnmG subunits. It depends on FAD as a cofactor.

The protein localises to the cytoplasm. In terms of biological role, NAD-binding protein involved in the addition of a carboxymethylaminomethyl (cmnm) group at the wobble position (U34) of certain tRNAs, forming tRNA-cmnm(5)s(2)U34. The sequence is that of tRNA uridine 5-carboxymethylaminomethyl modification enzyme MnmG from Enterobacter sp. (strain 638).